Consider the following 155-residue polypeptide: RNA pyrophosphohydrolase (155 aa).

The Nudix hydrolase domain occupies 5 to 147 (KYRPNVAAII…KRQVYRQVIA (143 aa)). The short motif at 42–63 (GGIDEGETPLEALYRELLEEIG) is the Nudix box element.

This sequence belongs to the Nudix hydrolase family. RppH subfamily. The cofactor is a divalent metal cation.

Accelerates the degradation of transcripts by removing pyrophosphate from the 5'-end of triphosphorylated RNA, leading to a more labile monophosphorylated state that can stimulate subsequent ribonuclease cleavage. The chain is RNA pyrophosphohydrolase from Helicobacter pylori (strain P12).